A 344-amino-acid polypeptide reads, in one-letter code: tRNA dimethylallyltransferase (344 aa).

43–50 (GPTCCGKS) is an ATP binding site. Substrate is bound at residue 45 to 50 (TCCGKS). Positions 68–71 (DSMQ) are interaction with substrate tRNA.

Belongs to the IPP transferase family. In terms of assembly, monomer. It depends on Mg(2+) as a cofactor.

The enzyme catalyses adenosine(37) in tRNA + dimethylallyl diphosphate = N(6)-dimethylallyladenosine(37) in tRNA + diphosphate. Functionally, catalyzes the transfer of a dimethylallyl group onto the adenine at position 37 in tRNAs that read codons beginning with uridine, leading to the formation of N6-(dimethylallyl)adenosine (i(6)A). In Protochlamydia amoebophila (strain UWE25), this protein is tRNA dimethylallyltransferase.